Here is a 122-residue protein sequence, read N- to C-terminus: Basic phospholipase A2 Cdr-12 (122 aa).

Intrachain disulfides connect C26–C115, C28–C44, C43–C95, C49–C122, C50–C88, C57–C81, and C75–C86. Ca(2+)-binding residues include Y27, G29, and G31. H47 is a catalytic residue. Residue D48 coordinates Ca(2+). Residue D89 is part of the active site.

Ca(2+) serves as cofactor. In terms of tissue distribution, expressed by the venom gland.

The protein resides in the secreted. The enzyme catalyses a 1,2-diacyl-sn-glycero-3-phosphocholine + H2O = a 1-acyl-sn-glycero-3-phosphocholine + a fatty acid + H(+). Its function is as follows. Snake venom phospholipase A2 (PLA2) that induces myonecrosis and edema upon intramuscular injections in mice. In vitro, causes a potent blockade of neuromuscular transmission in young chicken biventer cervicis preparation and produces cytotoxicity in murine C2C12 skeletal muscle myotubes and lack cytolytic activity upon myoblasts in vitro. PLA2 catalyzes the calcium-dependent hydrolysis of the 2-acyl groups in 3-sn-phosphoglycerides. The chain is Basic phospholipase A2 Cdr-12 from Crotalus durissus ruruima (South American rattlesnake).